The sequence spans 373 residues: Alpha-ketoglutarate dependent kainoid synthase (373 aa).

The Fe2OG dioxygenase domain occupies 204–320 (TINSKKMFFT…RSSLITFYEP (117 aa)). Residues His-235, Asp-237, and His-296 each contribute to the Fe cation site. A 2-oxoglutarate-binding site is contributed by Arg-311.

This sequence belongs to the iron/ascorbate-dependent oxidoreductase family. It depends on Fe(2+) as a cofactor.

The enzyme catalyses N-(7'-carboxy-7'-demethylgeranyl)-L-glutamate + 2-oxoglutarate + O2 = isodomoate A + succinate + CO2 + H2O. The catalysed reaction is N-geranyl-L-glutamate + 2-oxoglutarate + O2 = dainate A + succinate + CO2 + H2O. Its pathway is secondary metabolite biosynthesis. Functionally, iron/ascorbate-dependent oxidoreductase: part of the gene cluster that mediates the biosynthesis of domoic acid (DA) and derivatives, natural products with neurochemical activity acting as ionotropic glutamate receptor (iGluR) agonists, thus being neurotoxins causing amnesic shellfish poisoning (ASP). Catalyzes the conversion of 7'-N-carboxy-L-geranyl-L-glutamic acid (cNGG) to isodomoic acid-A. Also mediates the conversion of N-geranyl-L-glutamic acid (L-NGG) to dainic acid A. This is Alpha-ketoglutarate dependent kainoid synthase from Pseudo-nitzschia multiseries (Marine planktonic diatom).